A 328-amino-acid chain; its full sequence is MRVPLLILLFLVLTSGCIAPSTPSFTQTPTCLEQEKDLNKAIKCYLEDPREIKALTNLSKSLKGPNEEWTIWNILKWEEENLKYDDNKPTNYILRPSEFLVKRKGVCTDYTVLTLGLLLTLNYSQVGFMIVHYAESTTLHSTAIANVSGTLFVLDQKLPPLDLGSYIVESGKAGKLITQGELYYVSKSNGSIIIEGPTILGANDFIRQDYKIDEQELKSIEIALKTMIAQRSKLSQVYELKYSLPRGFKERRAWILKIPRFRVIYNPIFKEQYLETIIYHILEDEEIKEHIKTATGFYLEVTTEQEDLIIKFYLAKQYIYKGHNKNRG.

Residues 3-23 traverse the membrane as a helical segment; it reads VPLLILLFLVLTSGCIAPSTP.

This sequence belongs to the UPF0252 family.

The protein resides in the membrane. The protein is UPF0252 protein PF0978 of Pyrococcus furiosus (strain ATCC 43587 / DSM 3638 / JCM 8422 / Vc1).